The following is a 356-amino-acid chain: UDP-N-acetylglucosamine--N-acetylmuramyl-(pentapeptide) pyrophosphoryl-undecaprenol N-acetylglucosamine transferase (356 aa).

UDP-N-acetyl-alpha-D-glucosamine contacts are provided by residues 15–17, Asn127, Arg163, Ser191, Ile244, 263–268, and Gln288; these read TGG and ALTVSE.

Belongs to the glycosyltransferase 28 family. MurG subfamily.

It is found in the cell inner membrane. It catalyses the reaction di-trans,octa-cis-undecaprenyl diphospho-N-acetyl-alpha-D-muramoyl-L-alanyl-D-glutamyl-meso-2,6-diaminopimeloyl-D-alanyl-D-alanine + UDP-N-acetyl-alpha-D-glucosamine = di-trans,octa-cis-undecaprenyl diphospho-[N-acetyl-alpha-D-glucosaminyl-(1-&gt;4)]-N-acetyl-alpha-D-muramoyl-L-alanyl-D-glutamyl-meso-2,6-diaminopimeloyl-D-alanyl-D-alanine + UDP + H(+). The protein operates within cell wall biogenesis; peptidoglycan biosynthesis. In terms of biological role, cell wall formation. Catalyzes the transfer of a GlcNAc subunit on undecaprenyl-pyrophosphoryl-MurNAc-pentapeptide (lipid intermediate I) to form undecaprenyl-pyrophosphoryl-MurNAc-(pentapeptide)GlcNAc (lipid intermediate II). This Klebsiella pneumoniae (strain 342) protein is UDP-N-acetylglucosamine--N-acetylmuramyl-(pentapeptide) pyrophosphoryl-undecaprenol N-acetylglucosamine transferase.